Consider the following 473-residue polypeptide: Adenosylhomocysteinase (473 aa).

Residues Thr-64, Asp-139, and Glu-199 each contribute to the substrate site. NAD(+) is bound at residue 200–202 (TTT). Residues Lys-229 and Asp-233 each coordinate substrate. NAD(+)-binding positions include Asn-234, 263–268 (GYGDVG), Glu-286, Asn-321, 342–344 (IGH), and Asn-387.

The protein belongs to the adenosylhomocysteinase family. The cofactor is NAD(+).

The protein resides in the cytoplasm. The catalysed reaction is S-adenosyl-L-homocysteine + H2O = L-homocysteine + adenosine. The protein operates within amino-acid biosynthesis; L-homocysteine biosynthesis; L-homocysteine from S-adenosyl-L-homocysteine: step 1/1. In terms of biological role, may play a key role in the regulation of the intracellular concentration of adenosylhomocysteine. This is Adenosylhomocysteinase from Paraburkholderia phymatum (strain DSM 17167 / CIP 108236 / LMG 21445 / STM815) (Burkholderia phymatum).